The primary structure comprises 140 residues: Holo-[acyl-carrier-protein] synthase (140 aa).

Mg(2+) contacts are provided by D7 and E58.

Belongs to the P-Pant transferase superfamily. AcpS family. Mg(2+) serves as cofactor.

It is found in the cytoplasm. It carries out the reaction apo-[ACP] + CoA = holo-[ACP] + adenosine 3',5'-bisphosphate + H(+). Functionally, transfers the 4'-phosphopantetheine moiety from coenzyme A to a Ser of acyl-carrier-protein. The polypeptide is Holo-[acyl-carrier-protein] synthase (Chloroflexus aggregans (strain MD-66 / DSM 9485)).